The sequence spans 225 residues: Suppressor of cytokine signaling 3 (225 aa).

A kinase inhibitory region (KIR) region spans residues 22-33 (LKTFSSKSEYQL). Residues 34–45 (VVNAVRKLQESG) form an extended SH2 subdomain (ESS) region. Residues 46-142 (FYWSAVTGGE…APSFPSPPTE (97 aa)) form the SH2 domain. Positions 131 to 142 (PGAPSFPSPPTE) are enriched in pro residues. A disordered region spans residues 131–162 (PGAPSFPSPPTEPSSEVPEQPSAQPLPGSPPR). Residues 143 to 155 (PSSEVPEQPSAQP) are compositionally biased toward low complexity. An SOCS box domain is found at 177 to 224 (VLSRPLSSNVATLQHLCRKTVNGHLDSYEKVTQLPGPIREFLDQYDAP).

As to quaternary structure, interacts with multiple activated proteins of the tyrosine kinase signaling pathway including IGF1 receptor, insulin receptor and JAK2. Binding to JAK2 is mediated through the KIR and SH2 domains to a phosphorylated tyrosine residue within the JAK2 JH1 domain. Binds specific activated tyrosine residues of the leptin, EPO, IL12, GSCF and gp130 receptors. Interaction with CSNK1E stabilizes SOCS3 protein. Component of the probable ECS(SOCS3) E3 ubiquitin-protein ligase complex which contains CUL5, RNF7/RBX2, Elongin BC complex and SOCS3. Interacts with CUL5, RNF7, ELOB and ELOC. Interacts with CUL2. Interacts with FGFR3. Interacts with INSR. Interacts with BCL10; this interaction may interfere with BCL10-binding with PELI2. Interacts with NOD2 (via CARD domain); the interaction promotes NOD2 degradation. Phosphorylated on tyrosine residues after stimulation by the cytokines, IL-2, EPO or IGF1. As to expression, widely expressed with high expression in heart, placenta, skeletal muscle, peripheral blood leukocytes, fetal and adult lung, and fetal liver and kidney. Lower levels in thymus.

The protein operates within protein modification; protein ubiquitination. SOCS family proteins form part of a classical negative feedback system that regulates cytokine signal transduction. SOCS3 is involved in negative regulation of cytokines that signal through the JAK/STAT pathway. Inhibits cytokine signal transduction by binding to tyrosine kinase receptors including IL6ST/gp130, LIF, erythropoietin, insulin, IL12, GCSF and leptin receptors. Binding to JAK2 inhibits its kinase activity and regulates IL6 signaling. Suppresses fetal liver erythropoiesis. Regulates onset and maintenance of allergic responses mediated by T-helper type 2 cells. Probable substrate recognition component of a SCF-like ECS (Elongin BC-CUL2/5-SOCS-box protein) E3 ubiquitin-protein ligase complex which mediates the ubiquitination and subsequent proteasomal degradation of target proteins. The chain is Suppressor of cytokine signaling 3 from Homo sapiens (Human).